We begin with the raw amino-acid sequence, 784 residues long: Kinesin-like protein Klp68D (784 aa).

Residues 19–344 enclose the Kinesin motor domain; that stretch reads CVQVVVRCRP…LRYASRAKSI (326 aa). 106–113 contacts ATP; it reads GQTGTGKT. The stretch at 351–385 forms a coiled coil; that stretch reads NEDPQDAKLKEYQEEIERLKRLIGPQQQQRSEKQV. Disordered regions lie at residues 371–449, 605–652, and 742–784; these read RLIG…ERER, KFSS…PSSL, and IKSS…LVNK. The segment covering 386 to 396 has biased composition (basic residues); it reads TAKKQRVKKPK. Residues 416-428 show a composition bias toward acidic residues; it reads PVEDDSDPEGAES. Residues 426 to 582 are a coiled coil; the sequence is AESESDKENE…KRQLLIIDNF (157 aa). A compositionally biased stretch (basic and acidic residues) spans 429-449; that stretch reads ESDKENEAEVAKSNEELERER. Residues 622–634 show a composition bias toward basic residues; the sequence is SSKRPVSHPQRRR. The segment covering 769-778 has biased composition (low complexity); it reads KKPASAYPKA.

This sequence belongs to the TRAFAC class myosin-kinesin ATPase superfamily. Kinesin family. Kinesin II subfamily. In terms of tissue distribution, expressed primarily in the central nervous system and in a subset of the peripheral nervous system during embryogenesis.

The protein localises to the cytoplasm. It is found in the cytoskeleton. Its function is as follows. Plus-end directed microtubule motor that may be used for anterograde axonal transport and could conceivably move cargos in fly neurons different than those moved by kinesin heavy chain or other plus-end directed motors. The protein is Kinesin-like protein Klp68D (Klp68D) of Drosophila melanogaster (Fruit fly).